The primary structure comprises 195 residues: Large ribosomal subunit protein uL5 (195 aa).

The protein belongs to the universal ribosomal protein uL5 family. As to quaternary structure, part of the 50S ribosomal subunit; part of the 5S rRNA/L5/L18/L25 subcomplex. Contacts the 5S rRNA and the P site tRNA. Forms a bridge to the 30S subunit in the 70S ribosome.

In terms of biological role, this is one of the proteins that bind and probably mediate the attachment of the 5S RNA into the large ribosomal subunit, where it forms part of the central protuberance. In the 70S ribosome it contacts protein S13 of the 30S subunit (bridge B1b), connecting the 2 subunits; this bridge is implicated in subunit movement. Contacts the P site tRNA; the 5S rRNA and some of its associated proteins might help stabilize positioning of ribosome-bound tRNAs. This Chlorobium phaeobacteroides (strain DSM 266 / SMG 266 / 2430) protein is Large ribosomal subunit protein uL5.